A 364-amino-acid chain; its full sequence is A-type ATP synthase subunit C (364 aa).

It belongs to the V-ATPase V0D/AC39 subunit family. Has multiple subunits with at least A(3), B(3), C, D, E, F, H, I and proteolipid K(x).

The protein localises to the cell membrane. In terms of biological role, component of the A-type ATP synthase that produces ATP from ADP in the presence of a proton gradient across the membrane. This is A-type ATP synthase subunit C from Desulfurococcus sp. (strain SY).